A 203-amino-acid polypeptide reads, in one-letter code: Thymidylate kinase (203 aa).

10 to 17 serves as a coordination point for ATP; it reads GTEGSGKS.

The protein belongs to the thymidylate kinase family.

The enzyme catalyses dTMP + ATP = dTDP + ADP. Phosphorylation of dTMP to form dTDP in both de novo and salvage pathways of dTTP synthesis. The sequence is that of Thymidylate kinase from Dichelobacter nodosus (strain VCS1703A).